A 937-amino-acid polypeptide reads, in one-letter code: Inactive tyrosine-protein kinase transmembrane receptor ROR1 (937 aa).

Residues 1–29 (MHRPRRRGTRPPLLALLAALLLAARGAAA) form the signal peptide. Topologically, residues 30–406 (QETELSVSAE…KEKNKMEILY (377 aa)) are extracellular. Residues 42–147 (PTSSWNISSE…EVVSSTGVLF (106 aa)) enclose the Ig-like C2-type domain. Asn47 and Asn66 each carry an N-linked (GlcNAc...) asparagine glycan. 9 disulfide bridges follow: Cys79/Cys131, Cys170/Cys235, Cys178/Cys228, Cys219/Cys260, Cys248/Cys296, Cys252/Cys282, Cys313/Cys391, Cys334/Cys374, and Cys362/Cys386. The FZ domain maps to 165 to 299 (EEDGFCQPYR…SPEAANCIRI (135 aa)). An N-linked (GlcNAc...) asparagine glycan is attached at Asn184. Residues 312-391 (KCYNSTGVDY…KSDLCDIPAC (80 aa)) form the Kringle domain. Asn315 is a glycosylation site (N-linked (GlcNAc...) asparagine). The helical transmembrane segment at 407-427 (ILVPSVAIPLAIALLFFFICV) threads the bilayer. Residues 428-937 (CRNNQKSSSA…HTESMISAEL (510 aa)) lie on the Cytoplasmic side of the membrane. In terms of domain architecture, Protein kinase spans 473–746 (VRFMEELGEC…PRFKDIHVRL (274 aa)). Residues 479–487 (LGECAFGKI) and Lys506 contribute to the ATP site. A Phosphotyrosine; by autocatalysis modification is found at Tyr645. Residues 753-762 (SSHTSSTTPS) are compositionally biased toward low complexity. Disordered stretches follow at residues 753-779 (SSHT…SPVS) and 833-890 (AAHY…HMSI). Residues 763-779 (GGNATTQTTSLSASPVS) are compositionally biased toward polar residues. Residues 854–864 (RSPSSASGSTS) show a composition bias toward low complexity. Residues 865 to 880 (TGHVTSLPSSGSNQEA) are compositionally biased toward polar residues.

It belongs to the protein kinase superfamily. Tyr protein kinase family. ROR subfamily. As to quaternary structure, interacts with ERBB2 and IGFBP5. In terms of tissue distribution, expressed strongly in human heart, lung and kidney, but weakly in the CNS. Isoform Short is strongly expressed in fetal and adult CNS and in a variety of human cancers, including those originating from CNS or PNS neuroectoderm.

Its subcellular location is the membrane. The protein localises to the cell projection. It is found in the axon. Has very low kinase activity in vitro and is unlikely to function as a tyrosine kinase in vivo. Receptor for ligand WNT5A which activate downstream NFkB signaling pathway and may result in the inhibition of WNT3A-mediated signaling. In inner ear, crucial for spiral ganglion neurons to innervate auditory hair cells. Via IGFBP5 ligand, forms a complex with ERBB2 to enhance CREB oncogenic signaling. The protein is Inactive tyrosine-protein kinase transmembrane receptor ROR1 (ROR1) of Homo sapiens (Human).